We begin with the raw amino-acid sequence, 323 residues long: Phospho-N-acetylmuramoyl-pentapeptide-transferase (323 aa).

The next 9 helical transmembrane spans lie at 12-32 (IVMAIVISFIVASILGPIIIP), 58-78 (PTIGGLIFIFATIITMFVMVG), 84-104 (AMIALYSFVGFGFVGFLDDLL), 120-140 (MILLLIISGFLTWYAYKYIGT), 151-171 (INLGLFYIPAAMFYFAGVTNA), 177-197 (GLDGLATSVTVLVTTFLGIIS), 200-220 (LGHISLAIFCVALAGALLAFL), 229-250 (VFMGDTGSLALGGAVAMVALIL), and 303-323 (KIVSVFSIITVVFCFIAFASL).

It belongs to the glycosyltransferase 4 family. MraY subfamily. Mg(2+) serves as cofactor.

The protein localises to the cell membrane. It carries out the reaction UDP-N-acetyl-alpha-D-muramoyl-L-alanyl-gamma-D-glutamyl-meso-2,6-diaminopimeloyl-D-alanyl-D-alanine + di-trans,octa-cis-undecaprenyl phosphate = di-trans,octa-cis-undecaprenyl diphospho-N-acetyl-alpha-D-muramoyl-L-alanyl-D-glutamyl-meso-2,6-diaminopimeloyl-D-alanyl-D-alanine + UMP. Its pathway is cell wall biogenesis; peptidoglycan biosynthesis. Its function is as follows. Catalyzes the initial step of the lipid cycle reactions in the biosynthesis of the cell wall peptidoglycan: transfers peptidoglycan precursor phospho-MurNAc-pentapeptide from UDP-MurNAc-pentapeptide onto the lipid carrier undecaprenyl phosphate, yielding undecaprenyl-pyrophosphoryl-MurNAc-pentapeptide, known as lipid I. The protein is Phospho-N-acetylmuramoyl-pentapeptide-transferase of Clostridium perfringens (strain SM101 / Type A).